Reading from the N-terminus, the 284-residue chain is Phosphatidylglycerol--prolipoprotein diacylglyceryl transferase (284 aa).

A run of 7 helical transmembrane segments spans residues 21-41, 62-82, 106-126, 136-156, 190-210, 218-238, and 252-272; these read IEVH…FYMA, YFLW…ILIY, FVGI…IASY, LLIY…FGRI, PSQL…VMWA, GLLI…AEFY, and LSMG…ILLY. A 1,2-diacyl-sn-glycero-3-phospho-(1'-sn-glycerol) is bound at residue Arg155.

The protein belongs to the Lgt family.

Its subcellular location is the cell inner membrane. It carries out the reaction L-cysteinyl-[prolipoprotein] + a 1,2-diacyl-sn-glycero-3-phospho-(1'-sn-glycerol) = an S-1,2-diacyl-sn-glyceryl-L-cysteinyl-[prolipoprotein] + sn-glycerol 1-phosphate + H(+). The protein operates within protein modification; lipoprotein biosynthesis (diacylglyceryl transfer). In terms of biological role, catalyzes the transfer of the diacylglyceryl group from phosphatidylglycerol to the sulfhydryl group of the N-terminal cysteine of a prolipoprotein, the first step in the formation of mature lipoproteins. In Helicobacter pylori (strain P12), this protein is Phosphatidylglycerol--prolipoprotein diacylglyceryl transferase.